We begin with the raw amino-acid sequence, 524 residues long: Strychnine-10-hydroxylase (524 aa).

Residues leucine 6–phenylalanine 26 traverse the membrane as a helical segment. Cysteine 466 serves as a coordination point for heme.

It belongs to the cytochrome P450 family. Heme serves as cofactor.

Its subcellular location is the membrane. The enzyme catalyses strychnine + reduced [NADPH--hemoprotein reductase] + O2 = 10-hydroxystrychnine + oxidized [NADPH--hemoprotein reductase] + H2O + H(+). Its pathway is alkaloid biosynthesis. Monooxygenase involved in the biosynthesis of curare monoterpene indole alkaloids (MIAs), natural products such as strychnine, a neurotoxic compound used as a pesticide to control rodents, and its pharmacologically active derivatives, including brucine, used to regulate blood pressure. Curare alkaloids act as animal glycine receptor antagonists. Catalyzes the conversion of strychnine to 10-OH strychnine. This Strychnos nux-vomica (Poison nut) protein is Strychnine-10-hydroxylase.